A 471-amino-acid chain; its full sequence is Cytochrome P450 monooxygenase afvE (471 aa).

The helical transmembrane segment at 265–285 (IIFYHFELSTPVAFFIIFAVY) threads the bilayer. Cysteine 410 is a binding site for heme.

It belongs to the cytochrome P450 family. Heme serves as cofactor.

The protein localises to the membrane. The protein operates within secondary metabolite biosynthesis. Cytochrome P450 monooxygenase; part of the gene cluster that mediates the biosynthesis of aflavarin, a bicoumarin that exhibits anti-insectan activity against the fungivorous beetle C.hemipterus. This chain is Cytochrome P450 monooxygenase afvE, found in Aspergillus flavus (strain ATCC 200026 / FGSC A1120 / IAM 13836 / NRRL 3357 / JCM 12722 / SRRC 167).